Consider the following 81-residue polypeptide: Acyl carrier protein (81 aa).

Residues 4-79 (SEIFGKVKDI…AAVDFIAGKV (76 aa)) form the Carrier domain. At Ser-39 the chain carries O-(pantetheine 4'-phosphoryl)serine.

Belongs to the acyl carrier protein (ACP) family. Post-translationally, 4'-phosphopantetheine is transferred from CoA to a specific serine of apo-ACP by AcpS. This modification is essential for activity because fatty acids are bound in thioester linkage to the sulfhydryl of the prosthetic group.

Its subcellular location is the cytoplasm. Its pathway is lipid metabolism; fatty acid biosynthesis. Functionally, carrier of the growing fatty acid chain in fatty acid biosynthesis. The protein is Acyl carrier protein of Acaryochloris marina (strain MBIC 11017).